The sequence spans 377 residues: 1,3,6,8-tetrahydroxynaphthalene synthase (377 aa).

Residue Cys164 is part of the active site.

It belongs to the thiolase-like superfamily. Chalcone/stilbene synthases family. As to quaternary structure, homodimer.

It carries out the reaction 5 malonyl-CoA + 5 H(+) = naphthalene-1,3,6,8-tetrol + 5 CO2 + 5 CoA + H2O. It functions in the pathway pigment biosynthesis; melanin biosynthesis. Functionally, involved in the biosynthesis of melanin but also various secondary metabolites containing a naphthoquinone ring. Catalyzes the iterative condensation of five CoA-linked malonyl units to form a pentaketide intermediate. THNS subsequently catalyzes the dual intramolecular Claisen and aldol condensations of this linear intermediate to produce the fused ring of 1,3,6,8-tetrahydroxynaphthalene (THN). This is 1,3,6,8-tetrahydroxynaphthalene synthase from Streptomyces peucetius subsp. caesius.